The primary structure comprises 141 residues: Large ribosomal subunit protein uL11 (141 aa).

It belongs to the universal ribosomal protein uL11 family. Part of the ribosomal stalk of the 50S ribosomal subunit. Interacts with L10 and the large rRNA to form the base of the stalk. L10 forms an elongated spine to which L12 dimers bind in a sequential fashion forming a multimeric L10(L12)X complex. In terms of processing, one or more lysine residues are methylated.

Its function is as follows. Forms part of the ribosomal stalk which helps the ribosome interact with GTP-bound translation factors. This Geobacter sulfurreducens (strain ATCC 51573 / DSM 12127 / PCA) protein is Large ribosomal subunit protein uL11.